Consider the following 385-residue polypeptide: Queuine tRNA-ribosyltransferase (385 aa).

Residue Asp92 is the Proton acceptor of the active site. Substrate-binding positions include 92–96 (DSGGF), Asp146, Gln188, and Gly215. An RNA binding region spans residues 246 to 252 (GVGHPED). Catalysis depends on Asp265, which acts as the Nucleophile. The segment at 270-274 (TRTGR) is RNA binding; important for wobble base 34 recognition. Residues Cys303, Cys305, Cys308, and His334 each coordinate Zn(2+).

This sequence belongs to the queuine tRNA-ribosyltransferase family. As to quaternary structure, homodimer. Within each dimer, one monomer is responsible for RNA recognition and catalysis, while the other monomer binds to the replacement base PreQ1. Zn(2+) serves as cofactor.

It carries out the reaction 7-aminomethyl-7-carbaguanine + guanosine(34) in tRNA = 7-aminomethyl-7-carbaguanosine(34) in tRNA + guanine. It functions in the pathway tRNA modification; tRNA-queuosine biosynthesis. Its function is as follows. Catalyzes the base-exchange of a guanine (G) residue with the queuine precursor 7-aminomethyl-7-deazaguanine (PreQ1) at position 34 (anticodon wobble position) in tRNAs with GU(N) anticodons (tRNA-Asp, -Asn, -His and -Tyr). Catalysis occurs through a double-displacement mechanism. The nucleophile active site attacks the C1' of nucleotide 34 to detach the guanine base from the RNA, forming a covalent enzyme-RNA intermediate. The proton acceptor active site deprotonates the incoming PreQ1, allowing a nucleophilic attack on the C1' of the ribose to form the product. After dissociation, two additional enzymatic reactions on the tRNA convert PreQ1 to queuine (Q), resulting in the hypermodified nucleoside queuosine (7-(((4,5-cis-dihydroxy-2-cyclopenten-1-yl)amino)methyl)-7-deazaguanosine). In Thermus thermophilus (strain ATCC 27634 / DSM 579 / HB8), this protein is Queuine tRNA-ribosyltransferase.